The primary structure comprises 403 residues: SEC14-like protein 2 (403 aa).

The residue at position 51 (Lys51) is an N6-succinyllysine. The 174-residue stretch at 76-249 folds into the CRAL-TRIO domain; it reads PPEVIQQYLS…EYGGTMTDPD (174 aa). N6-succinyllysine occurs at positions 253 and 257. Residues 275–383 enclose the GOLD domain; it reads KQQYEHSVQI…AKKVNFTVEV (109 aa). Residue Lys393 is modified to N6-succinyllysine.

As to quaternary structure, monomer. Widely expressed. Strong expression in liver, brain and prostate.

Its subcellular location is the cytoplasm. The protein resides in the nucleus. In terms of biological role, carrier protein. Binds to some hydrophobic molecules and promotes their transfer between the different cellular sites. Binds with high affinity to alpha-tocopherol. Also binds with a weaker affinity to other tocopherols and to tocotrienols. May have a transcriptional activatory activity via its association with alpha-tocopherol. Probably recognizes and binds some squalene structure, suggesting that it may regulate cholesterol biosynthesis by increasing the transfer of squalene to a metabolic active pool in the cell. This Homo sapiens (Human) protein is SEC14-like protein 2 (SEC14L2).